A 112-amino-acid chain; its full sequence is Hydrogenase maturation factor HypA (112 aa).

Histidine 2 serves as a coordination point for Ni(2+). Cysteine 72, cysteine 75, cysteine 88, and cysteine 91 together coordinate Zn(2+).

Belongs to the HypA/HybF family.

Its function is as follows. Involved in the maturation of [NiFe] hydrogenases. Required for nickel insertion into the metal center of the hydrogenase. This chain is Hydrogenase maturation factor HypA, found in Francisella philomiragia subsp. philomiragia (strain ATCC 25017 / CCUG 19701 / FSC 153 / O#319-036).